Consider the following 761-residue polypeptide: Elongation factor G, mitochondrial (761 aa).

The N-terminal 42 residues, Met-1–Arg-42, are a transit peptide targeting the mitochondrion. In terms of domain architecture, tr-type G spans Asn-68–Ser-349. Residues Ala-77–Thr-84, Asp-148–His-152, and Asn-202–Asp-205 contribute to the GTP site.

This sequence belongs to the TRAFAC class translation factor GTPase superfamily. Classic translation factor GTPase family. EF-G/EF-2 subfamily. The precursor is processed in two steps involving mitochondrial intermediate peptidase (MIP) and mitochondrial processing peptidase (MPP).

It localises to the mitochondrion. Its pathway is protein biosynthesis; polypeptide chain elongation. Mitochondrial GTPase that catalyzes the GTP-dependent ribosomal translocation step during translation elongation. During this step, the ribosome changes from the pre-translocational (PRE) to the post-translocational (POST) state as the newly formed A-site-bound peptidyl-tRNA and P-site-bound deacylated tRNA move to the P and E sites, respectively. Catalyzes the coordinated movement of the two tRNA molecules, the mRNA and conformational changes in the ribosome. The protein is Elongation factor G, mitochondrial of Saccharomyces cerevisiae (strain YJM789) (Baker's yeast).